Here is a 484-residue protein sequence, read N- to C-terminus: Glycogen synthase 2 (484 aa).

K15 is a binding site for ADP-alpha-D-glucose.

This sequence belongs to the glycosyltransferase 1 family. Bacterial/plant glycogen synthase subfamily.

It catalyses the reaction [(1-&gt;4)-alpha-D-glucosyl](n) + ADP-alpha-D-glucose = [(1-&gt;4)-alpha-D-glucosyl](n+1) + ADP + H(+). It participates in glycan biosynthesis; glycogen biosynthesis. Functionally, synthesizes alpha-1,4-glucan chains using ADP-glucose. The chain is Glycogen synthase 2 from Geobacter metallireducens (strain ATCC 53774 / DSM 7210 / GS-15).